The chain runs to 430 residues: Glutamate-1-semialdehyde 2,1-aminomutase (430 aa).

K265 carries the post-translational modification N6-(pyridoxal phosphate)lysine.

The protein belongs to the class-III pyridoxal-phosphate-dependent aminotransferase family. HemL subfamily. In terms of assembly, homodimer. It depends on pyridoxal 5'-phosphate as a cofactor.

It localises to the cytoplasm. It carries out the reaction (S)-4-amino-5-oxopentanoate = 5-aminolevulinate. It functions in the pathway porphyrin-containing compound metabolism; protoporphyrin-IX biosynthesis; 5-aminolevulinate from L-glutamyl-tRNA(Glu): step 2/2. The polypeptide is Glutamate-1-semialdehyde 2,1-aminomutase (Shewanella baltica (strain OS223)).